A 469-amino-acid polypeptide reads, in one-letter code: Fe(3+)-Zn(2+) purple acid phosphatase 12 (469 aa).

The signal sequence occupies residues 1–28 (MSSRSDLKIKRVSLIIFLLSVLVEFCYG). Residue Asn-114 is glycosylated (N-linked (GlcNAc...) asparagine). Asp-168 lines the Fe cation pocket. Asn-176 carries an N-linked (GlcNAc...) asparagine glycan. 2 residues coordinate Fe cation: Asp-197 and Tyr-200. A Zn(2+)-binding site is contributed by Asp-197. Asn-234 lines the Zn(2+) pocket. Asn-234 provides a ligand contact to substrate. N-linked (GlcNAc...) asparagine glycosylation occurs at Asn-307. His-319 contributes to the Zn(2+) binding site. The active-site Proton donor is the His-329. Zn(2+) is bound at residue His-356. 356–358 (HVH) serves as a coordination point for substrate. Fe cation is bound at residue His-358. N-linked (GlcNAc...) asparagine glycosylation is present at Asn-429.

It belongs to the metallophosphoesterase superfamily. Purple acid phosphatase family. As to quaternary structure, homodimer; disulfide-linked. The cofactor is Fe cation. Requires Zn(2+) as cofactor. Expressed in roots, stems, leaves, flowers and siliques.

The protein localises to the secreted. It carries out the reaction a phosphate monoester + H2O = an alcohol + phosphate. This chain is Fe(3+)-Zn(2+) purple acid phosphatase 12 (PAP12), found in Arabidopsis thaliana (Mouse-ear cress).